A 406-amino-acid chain; its full sequence is Phosphopentomutase (406 aa).

D10, D305, H310, D346, H347, and H358 together coordinate Mn(2+).

It belongs to the phosphopentomutase family. Mn(2+) is required as a cofactor.

Its subcellular location is the cytoplasm. The enzyme catalyses 2-deoxy-alpha-D-ribose 1-phosphate = 2-deoxy-D-ribose 5-phosphate. The catalysed reaction is alpha-D-ribose 1-phosphate = D-ribose 5-phosphate. The protein operates within carbohydrate degradation; 2-deoxy-D-ribose 1-phosphate degradation; D-glyceraldehyde 3-phosphate and acetaldehyde from 2-deoxy-alpha-D-ribose 1-phosphate: step 1/2. Functionally, isomerase that catalyzes the conversion of deoxy-ribose 1-phosphate (dRib-1-P) and ribose 1-phosphate (Rib-1-P) to deoxy-ribose 5-phosphate (dRib-5-P) and ribose 5-phosphate (Rib-5-P), respectively. This is Phosphopentomutase from Vibrio parahaemolyticus serotype O3:K6 (strain RIMD 2210633).